The sequence spans 125 residues: Large ribosomal subunit protein bL12 (125 aa).

The protein belongs to the bacterial ribosomal protein bL12 family. As to quaternary structure, homodimer. Part of the ribosomal stalk of the 50S ribosomal subunit. Forms a multimeric L10(L12)X complex, where L10 forms an elongated spine to which 2 to 4 L12 dimers bind in a sequential fashion. Binds GTP-bound translation factors.

In terms of biological role, forms part of the ribosomal stalk which helps the ribosome interact with GTP-bound translation factors. Is thus essential for accurate translation. The protein is Large ribosomal subunit protein bL12 of Francisella tularensis subsp. tularensis (strain SCHU S4 / Schu 4).